A 140-amino-acid chain; its full sequence is Putative pre-16S rRNA nuclease (140 aa).

It belongs to the YqgF nuclease family.

It is found in the cytoplasm. In terms of biological role, could be a nuclease involved in processing of the 5'-end of pre-16S rRNA. The polypeptide is Putative pre-16S rRNA nuclease (Aeromonas hydrophila).